The sequence spans 431 residues: Sorting nexin-31 (431 aa).

Residues 1–107 (MHICIPVTEE…DYFRKLQMDT (107 aa)) enclose the PX domain.

Belongs to the sorting nexin family.

Its function is as follows. May be involved in protein trafficking. The protein is Sorting nexin-31 (snx31) of Xenopus laevis (African clawed frog).